A 434-amino-acid polypeptide reads, in one-letter code: UDP-N-acetylglucosamine 1-carboxyvinyltransferase (434 aa).

A phosphoenolpyruvate-binding site is contributed by 22–23 (KN). Arginine 97 lines the UDP-N-acetyl-alpha-D-glucosamine pocket. Catalysis depends on aspartate 121, which acts as the Proton donor. The UDP-N-acetyl-alpha-D-glucosamine site is built by aspartate 319 and methionine 341.

Belongs to the EPSP synthase family. MurA subfamily.

Its subcellular location is the cytoplasm. The catalysed reaction is phosphoenolpyruvate + UDP-N-acetyl-alpha-D-glucosamine = UDP-N-acetyl-3-O-(1-carboxyvinyl)-alpha-D-glucosamine + phosphate. It participates in cell wall biogenesis; peptidoglycan biosynthesis. Functionally, cell wall formation. Adds enolpyruvyl to UDP-N-acetylglucosamine. This chain is UDP-N-acetylglucosamine 1-carboxyvinyltransferase, found in Bacteroides fragilis (strain ATCC 25285 / DSM 2151 / CCUG 4856 / JCM 11019 / LMG 10263 / NCTC 9343 / Onslow / VPI 2553 / EN-2).